Consider the following 908-residue polypeptide: Glutamate receptor ionotropic, kainate 2 (908 aa).

The N-terminal stretch at 1-31 (MKIISPVLSNLVFSRSIKVLLCLLWIGYSQG) is a signal peptide. At 32–561 (TTHVLRFGGI…VFSFLNPLSP (530 aa)) the chain is on the extracellular side. N-linked (GlcNAc...) asparagine glycans are attached at residues N67, N73, N275, N378, N412, N423, and N430. C96 and C347 are disulfide-bonded. P516, A518, and R523 together coordinate L-glutamate. N-linked (GlcNAc...) asparagine glycosylation occurs at N546. The helical transmembrane segment at 562-582 (DIWMYILLAYLGVSCVLFVIA) threads the bilayer. Over 583 to 638 (RFSPYEWYNPHPCNPDSDVVENNFTLLNSFWFGVGALMQQGSELMPKALSTRIVGG) the chain is Cytoplasmic. The chain crosses the membrane as a helical span at residues 639 to 659 (IWWFFTLIIISSYTANLAAFL). Topologically, residues 660–819 (TVERMESPID…KEASALGVQN (160 aa)) are extracellular. L-glutamate is bound by residues A689, T690, and E738. An intrachain disulfide couples C750 to C804. Residue N751 is glycosylated (N-linked (GlcNAc...) asparagine). Residues 820–840 (IGGIFIVLAAGLVLSVFVAVG) form a helical membrane-spanning segment. At 841–908 (EFLYKSKKNA…RRLPGKETMA (68 aa)) the chain is on the cytoplasmic side. S846 and S868 each carry phosphoserine; by PKC. A Glycyl lysine isopeptide (Lys-Gly) (interchain with G-Cter in SUMO1) cross-link involves residue K886.

It belongs to the glutamate-gated ion channel (TC 1.A.10.1) family. GRIK2 subfamily. Homotetramer and heterotetramer with GRIK5. Tetramers may be formed by the dimerization of dimers. Assembles into a kainate-gated homomeric channel that does not bind AMPA. Can form functional heteromeric receptors with GRIK4 and GRIK5. Can form functional heteromeric receptors with GRIK3. Interacts with DLG4. Interacts with NETO2. Interacts (via C-terminus) with KLHL17 (via kelch repeats); the interaction targets GRIK2 for degradation via ubiquitin-proteasome pathway. Sumoylation mediates kainate receptor-mediated endocytosis and regulates synaptic transmission. Sumoylation is enhanced by PIAS3 and desumoylated by SENP1. Post-translationally, ubiquitinated. Ubiquitination regulates the GRIK2 levels at the synapse by leading kainate receptor degradation through proteasome. In terms of processing, phosphorylated by PKC at Ser-868 upon agonist activation, this directly enhance sumoylation. As to expression, highest expression is found in the olfactory lobe, piriform cortex, dentate gyrus, hippocampus, granular cell layer of the cerebellum, and in caudate-putamen.

The protein localises to the cell membrane. It localises to the postsynaptic cell membrane. It catalyses the reaction Ca(2+)(in) = Ca(2+)(out). The enzyme catalyses Na(+)(in) = Na(+)(out). Its activity is regulated as follows. Cold receptor activity activated by temperatures between 10-19 degrees Celsius. Its function is as follows. Ionotropic glutamate receptor that functions as a cation-permeable ligand-gated ion channel, gated by L-glutamate and the glutamatergic agonist kainic acid. L-glutamate acts as an excitatory neurotransmitter at many synapses in the central nervous system. Binding of the excitatory neurotransmitter L-glutamate induces a conformation change, leading to the opening of the cation channel, and thereby converts the chemical signal to an electrical impulse. The receptor then desensitizes rapidly and enters a transient inactive state, characterized by the presence of bound agonist. Modulates cell surface expression of NETO2. In association with GRIK3, involved in presynaptic facilitation of glutamate release at hippocampal mossy fiber synapses. In terms of biological role, independent of its ionotropic glutamate receptor activity, acts as a thermoreceptor conferring sensitivity to cold temperatures. Functions in dorsal root ganglion neurons. This chain is Glutamate receptor ionotropic, kainate 2 (Grik2), found in Rattus norvegicus (Rat).